A 255-amino-acid chain; its full sequence is Putative F-box protein L126 (255 aa).

The region spanning 1-46 (MLPEEILFMVFSFLDVKELIACSHACSHACSQWRRICSDKLLWVQK) is the F-box domain.

This chain is Putative F-box protein L126, found in Acanthamoeba polyphaga (Amoeba).